The primary structure comprises 150 residues: D-aminoacyl-tRNA deacylase (150 aa).

The Gly-cisPro motif, important for rejection of L-amino acids signature appears at 136–137 (GP).

Belongs to the DTD family. In terms of assembly, homodimer.

The protein resides in the cytoplasm. The enzyme catalyses glycyl-tRNA(Ala) + H2O = tRNA(Ala) + glycine + H(+). It carries out the reaction a D-aminoacyl-tRNA + H2O = a tRNA + a D-alpha-amino acid + H(+). Functionally, an aminoacyl-tRNA editing enzyme that deacylates mischarged D-aminoacyl-tRNAs. Also deacylates mischarged glycyl-tRNA(Ala), protecting cells against glycine mischarging by AlaRS. Acts via tRNA-based rather than protein-based catalysis; rejects L-amino acids rather than detecting D-amino acids in the active site. By recycling D-aminoacyl-tRNA to D-amino acids and free tRNA molecules, this enzyme counteracts the toxicity associated with the formation of D-aminoacyl-tRNA entities in vivo and helps enforce protein L-homochirality. This Staphylococcus aureus (strain Mu50 / ATCC 700699) protein is D-aminoacyl-tRNA deacylase.